The following is a 455-amino-acid chain: Glutamyl-tRNA(Gln) amidotransferase subunit A (455 aa).

Catalysis depends on charge relay system residues Lys-74 and Ser-149. Residue Ser-173 is the Acyl-ester intermediate of the active site.

The protein belongs to the amidase family. GatA subfamily. As to quaternary structure, heterotrimer of A, B and C subunits.

The enzyme catalyses L-glutamyl-tRNA(Gln) + L-glutamine + ATP + H2O = L-glutaminyl-tRNA(Gln) + L-glutamate + ADP + phosphate + H(+). Its function is as follows. Allows the formation of correctly charged Gln-tRNA(Gln) through the transamidation of misacylated Glu-tRNA(Gln) in organisms which lack glutaminyl-tRNA synthetase. The reaction takes place in the presence of glutamine and ATP through an activated gamma-phospho-Glu-tRNA(Gln). The protein is Glutamyl-tRNA(Gln) amidotransferase subunit A of Methanosphaera stadtmanae (strain ATCC 43021 / DSM 3091 / JCM 11832 / MCB-3).